A 91-amino-acid polypeptide reads, in one-letter code: Sec-independent protein translocase protein TatAt (91 aa).

The helical transmembrane segment at 9 to 29 threads the bilayer; it reads FPGLPGGPELLVVLLIVVLLF. Residues 48-91 form a disordered region; that stretch reads FQRGREEIEDELQDMTGDDDEDDATSESSADSVSTDSVSTESSN. Residues 54–72 show a composition bias toward acidic residues; sequence EIEDELQDMTGDDDEDDAT. The segment covering 73 to 91 has biased composition (low complexity); the sequence is SESSADSVSTDSVSTESSN.

It belongs to the TatA/E family. In terms of assembly, forms a complex with TatC. Cytoplasmic and membrane-bound TatA form high-molecular-weight complexes.

The protein resides in the cell membrane. It is found in the cytoplasm. Part of the twin-arginine translocation (Tat) system that transports large folded proteins containing a characteristic twin-arginine motif in their signal peptide across membranes. TatA could form the protein-conducting channel of the Tat system. The sequence is that of Sec-independent protein translocase protein TatAt from Haloferax volcanii (strain ATCC 29605 / DSM 3757 / JCM 8879 / NBRC 14742 / NCIMB 2012 / VKM B-1768 / DS2) (Halobacterium volcanii).